Here is a 535-residue protein sequence, read N- to C-terminus: F-box protein At1g56610 (535 aa).

3 consecutive transmembrane segments (helical) span residues 3 to 23 (FALV…SSSI), 37 to 57 (VLLL…LCLF), and 82 to 102 (LAPH…SLLF). Residues 73-119 (TELCDLPKCLAPHILSWLPTKTAVTVSLLFMKGWWRSEMKNLSSLKF) form the F-box; degenerate domain.

As to quaternary structure, part of a SCF (ASK-cullin-F-box) protein ligase complex. Interacts with ASK4.

Its subcellular location is the membrane. It functions in the pathway protein modification; protein ubiquitination. Component of SCF(ASK-cullin-F-box) E3 ubiquitin ligase complexes, which may mediate the ubiquitination and subsequent proteasomal degradation of target proteins. This chain is F-box protein At1g56610, found in Arabidopsis thaliana (Mouse-ear cress).